Reading from the N-terminus, the 287-residue chain is Cuticle collagen 38 (287 aa).

An N-terminal signal peptide occupies residues 1–19 (MSKYLVPVCASISLVAVFG). The segment at 95–287 (QGCPPGPPGP…CPCPARAKKH (193 aa)) is disordered. Pro residues predominate over residues 98–107 (PPGPPGPPGL). 2 Collagen-like domains span residues 145–200 (QGPP…GSEG) and 215–273 (GQPG…SIGP). A compositionally biased stretch (low complexity) spans 184–205 (TGEQGPQGEPGTEGSEGPTGQD). The segment covering 206–215 (GTIGGPGLPG) has biased composition (gly residues). Positions 238–252 (DGEQGPQGPQGPDGQ) are enriched in low complexity.

It belongs to the cuticular collagen family. As to quaternary structure, collagen polypeptide chains are complexed within the cuticle by disulfide bonds and other types of covalent cross-links.

The protein resides in the nucleus. Functionally, probable cuticular collagen-like protein. Nematode cuticles are composed largely of collagen-like proteins. The cuticle functions both as an exoskeleton and as a barrier to protect the worm from its environment. Acts downstream of the Wnt signaling pathway, perhaps in the formation of the adult cuticle. The polypeptide is Cuticle collagen 38 (Caenorhabditis elegans).